Consider the following 292-residue polypeptide: MEANRGQVNHELSKLFNELWDADVNRMKAGKDYRISLQGKAGYVPARSNQAKDSASYPLFQFVDEEKLKSKKTFATFISLLDNYEMDTGVAEVVTPEEIAENNNFLDAILETKVMKMAHDYLVRKNQAKPSQNDFKVQLYSIWFQLYSRAPGSRPDSCGFEHVFVGESKRGKEMMGLHNWVQFYLQEKRKNIDYKGYVARQNKSRPDEDDQVLNLQFSWKEMVKPVGSSFIGVSPEFEFALYTIVFLASQAKMSREVIRLEEYELQIVVNRHGRYIGTAYPALLSTNNPDLY.

The EndoU domain occupies V8–S285. Active-site residues include H162, H178, and K224.

Belongs to the ENDOU family. Monomer. Requires Mn(2+) as cofactor.

The protein resides in the nucleus. It carries out the reaction uridylyl-uridylyl-ribonucleotide-RNA = a 3'-end uridylyl-2',3'-cyclophospho-uridine-RNA + a 5'-end dephospho-ribonucleoside-RNA. Functionally, poly(U)-specific endoribonuclease involved in the processing of intron-encoded box C/D snoRNAs, such as U16 and U86. Releases products that have 2',3'-cyclic phosphate termini at the 3'-end. The protein is Poly(U)-specific endoribonuclease-B (endou-b) of Xenopus laevis (African clawed frog).